Reading from the N-terminus, the 560-residue chain is Phosphoglucomutase 1 (560 aa).

Arginine 24 and serine 116 together coordinate alpha-D-glucose 1,6-bisphosphate. Serine 116 (phosphoserine intermediate) is an active-site residue. Positions 116, 288, 290, and 292 each coordinate Mg(2+). Position 116 is a phosphoserine (serine 116). Alpha-D-glucose 1,6-bisphosphate-binding residues include aspartate 292, arginine 293, threonine 357, glutamate 376, serine 378, and lysine 389.

The protein belongs to the phosphohexose mutase family. As to quaternary structure, monomer. Mg(2+) serves as cofactor. As to expression, localized primarily to fat bodies in third instar larvae.

It catalyses the reaction alpha-D-glucose 1-phosphate = alpha-D-glucose 6-phosphate. The catalysed reaction is O-phospho-L-seryl-[protein] + alpha-D-glucose 1-phosphate = alpha-D-glucose 1,6-bisphosphate + L-seryl-[protein]. The enzyme catalyses alpha-D-glucose 1,6-bisphosphate + L-seryl-[protein] = O-phospho-L-seryl-[protein] + alpha-D-glucose 6-phosphate. Its function is as follows. Catalyzes the reversible isomerization of alpha-D-glucose 1-phosphate to alpha-D-glucose 6-phosphate. The mechanism proceeds via the intermediate compound alpha-D-glucose 1,6-bisphosphate. This enzyme participates in both the breakdown and synthesis of glucose. Enzyme of the glycolytic pathway. Glycolysis is essential in glial cells but not in neurons; neurons rely on the citric acid cycle for their energy needs, and on lactate and alanine secreted into the hemolymph by glial cells to fuel it. This is Phosphoglucomutase 1 from Drosophila melanogaster (Fruit fly).